Reading from the N-terminus, the 170-residue chain is Opacity-related protein POPM3 (170 aa).

This sequence belongs to the opacity porin family.

It is found in the cell outer membrane. The polypeptide is Opacity-related protein POPM3 (opr) (Neisseria meningitidis serogroup C).